The sequence spans 1754 residues: Collagen alpha-1(XVIII) chain (1754 aa).

An N-terminal signal peptide occupies residues 1–23 (MAPYPCGCHILLLLFCCLAAARA). The disordered stretch occupies residues 42 to 104 (ATTIPEPQGP…TSAESPDAPE (63 aa)). Residues 57–73 (TADTTTHVTPRNGSTEP) are compositionally biased toward polar residues. Residues asparagine 68, asparagine 129, and asparagine 164 are each glycosylated (N-linked (GlcNAc...) asparagine). Residues 152-256 (LALAGPSSTP…APSQQLQRPD (105 aa)) are disordered. A compositionally biased stretch (polar residues) spans 157-169 (PSSTPQENGTTLW). Residues 215-253 (SGRASLSSLLGGAPPWGSLQDPDSQGLSPAAAAPSQQLQ) show a composition bias toward low complexity. The 118-residue stretch at 329-446 (APAGRCLPLP…TQEDGYCVLI (118 aa)) folds into the FZ domain. Intrachain disulfides connect cysteine 334–cysteine 397, cysteine 344–cysteine 390, cysteine 381–cysteine 419, cysteine 408–cysteine 443, and cysteine 412–cysteine 432. In terms of domain architecture, Laminin G-like spans 456–644 (EVGLLQLLGD…IAELKVRRDP (189 aa)). A nonhelical region 1 (NC1) region spans residues 645 to 751 (QVSPMHCLDE…RTPGGRVKEG (107 aa)). A disordered region spans residues 645–1443 (QVSPMHCLDE…GPPGTMGASS (799 aa)). Residues 672-681 (DARELLREET) show a composition bias toward basic and acidic residues. Threonine 696 bears the Phosphothreonine mark. Positions 717–738 (QTTVASLGAQTLPGSDSVSTWD) are enriched in polar residues. Residues 752–785 (GLKGQKGEPGVPGPPGRAGPPGSPCLPGPPGLPC) are triple-helical region 1 (COL1). Positions 762–789 (VPGPPGRAGPPGSPCLPGPPGLPCPVSP) are enriched in pro residues. The nonhelical region 2 (NC2) stretch occupies residues 786–795 (PVSPLGPAGP). Residues 796–875 (ALQTVPGPQG…QGPPGPPGPS (80 aa)) form a triple-helical region 2 (COL2) region. Over residues 815-831 (TPGRDGEPGDPGEDGKP) the composition is skewed to basic and acidic residues. A compositionally biased stretch (low complexity) spans 833–846 (DTGPQGFPGTPGDV). The segment covering 862–874 (PPGPQGPPGPPGP) has biased composition (pro residues). Residues 876-899 (FRHDKLTFIDMEGSGFGGDLEALR) are nonhelical region 3 (NC3). Serine 889 carries O-linked (Xyl...) (chondroitin sulfate) serine glycosylation. The tract at residues 900–1021 (GPRGFPGPPG…PGPPGPPGPG (122 aa)) is triple-helical region 3 (COL3). Residues 904 to 914 (FPGPPGPPGVP) are compositionally biased toward pro residues. Asparagine 926 carries an N-linked (GlcNAc...) asparagine glycan. A compositionally biased stretch (low complexity) spans 930 to 942 (VPGPAGLPGVPGR). Residues 946–961 (PGFPGLPGPPGPPGRE) are compositionally biased toward pro residues. The span at 976–1003 (AGAPGHKGSKGAPGPAGARGESGLAGAP) shows a compositional bias: low complexity. Pro residues predominate over residues 1005–1021 (PAGPPGPPGPPGPPGPG). The segment at 1022–1044 (LPAGFDDMEGSGGPFWSTARSAD) is nonhelical region 4 (NC4). The triple-helical region 4 (COL4) stretch occupies residues 1045–1127 (GPQGPPGLPG…PGPPGPPGPV (83 aa)). A compositionally biased stretch (low complexity) spans 1053–1065 (PGLKGDPGVPGLP). Residues 1095–1109 (KGDRGSRGEKGDPGK) are compositionally biased toward basic and acidic residues. A compositionally biased stretch (pro residues) spans 1117 to 1126 (LPGPPGPPGP). The tract at residues 1128 to 1141 (VYVSEQDGSVLSVP) is nonhelical region 5 (NC5). The segment covering 1141–1153 (PGPEGRPGFAGFP) has biased composition (low complexity). The interval 1142–1183 (GPEGRPGFAGFPGPAGPKGNLGSKGERGSPGPKGEKGEPGSI) is triple-helical region 5 (COL5). Residues 1184-1196 (FSPDGGALGPAQK) are nonhelical region 6 (NC6). The interval 1197 to 1269 (GAKGEPGFRG…PGPPGPPGTP (73 aa)) is triple-helical region 6 (COL6). Pro residues predominate over residues 1254–1268 (PGPPGPPGPPGPPGT). Positions 1270–1279 (VYDSNVFAES) are nonhelical region 7 (NC7). The segment at 1280–1312 (SRPGPPGLPGNQGPPGPKGAKGEVGPPGPPGQF) is triple-helical region 7 (COL7). Over residues 1282–1296 (PGPPGLPGNQGPPGP) the composition is skewed to pro residues. Residues 1313-1324 (PFDFLQLEAEMK) are nonhelical region 8 (NC8). The segment covering 1321 to 1341 (AEMKGEKGDRGDAGQKGERGE) has biased composition (basic and acidic residues). The triple-helical region 8 (COL8) stretch occupies residues 1325 to 1346 (GEKGDRGDAGQKGERGEPGGGG). The Cell attachment site signature appears at 1330 to 1332 (RGD). Residues 1347-1353 (FFGSSLP) form a nonhelical region 9 (NC9) region. Pro residues-rich tracts occupy residues 1353–1365 (PGPP…PGPR), 1401–1414 (PPGP…PSFP), and 1424–1436 (PGPP…PGPP). Positions 1354–1411 (GPPGPPGPPGPRGYPGIPGPKGESIRGQPGPPGPQGPPGIGYEGRQGPPGPPGPPGPP) are triple-helical region 9 (COL9). The nonhelical region 10 (NC10) stretch occupies residues 1412-1424 (SFPGPHRQTISVP). The tract at residues 1425 to 1442 (GPPGPPGPPGPPGTMGAS) is triple-helical region 10 (COL10). A nonhelical region 11 (NC11) region spans residues 1443-1754 (SGVRLWATRQ…IENSFMTASK (312 aa)). The tract at residues 1456 to 1501 (GQVHEVPEGWLIFVAEQEELYVRVQNGFRKVQLEARTPLPRGTDNE) is non-collagenous domain 1 association domain. The interval 1502 to 1571 (VAALQPPVVQ…RPARPTSPPA (70 aa)) is non-collagenous domain 1 hinge region. A disordered region spans residues 1511–1556 (QLHDSNPYPRREHPHPTARPWRADDILASPPRLPEPQPYPGAPHHS). Positions 1519–1535 (PRREHPHPTARPWRADD) are enriched in basic and acidic residues. The segment covering 1541 to 1551 (PRLPEPQPYPG) has biased composition (pro residues). Residue threonine 1567 is glycosylated (O-linked (GalNAc...) threonine). Positions 1572, 1574, 1582, and 1647 each coordinate Zn(2+). Cystine bridges form between cysteine 1604–cysteine 1744 and cysteine 1706–cysteine 1736.

This sequence belongs to the multiplexin collagen family. In terms of assembly, forms homotrimers. Recombinant non-collagenous domain 1 has stronger affinity to NID1, HSPG2 and laminin-1:NID1 complex and lower affinity to FBLN1 and FBLN2 than endostatin. As to quaternary structure, monomeric. Interacts with KDR/VEGFR2. Interacts with the ITGA5:ITGB1 complex. Interacts with NID1, HSPG2, laminin-1:NID1 complex, FBLN1 and FBLN2. In terms of processing, prolines at the third position of the tripeptide repeating unit (G-X-Y) of the triple-helical regions are hydroxylated. Circulating endostatins are found as sialoglycoprotein and asialoglycoprotein structures. Post-translationally, undergoes proteolytic processing by CTSL/cathepsin-L and elastase-like proteases to generate both non-collagenous domain 1 trimers and endostatin monomers. In tissue extracts (brain, skeletal muscle, heart, kidney, testis and liver) predominantly bands of approximately 38 kDa are detected; recombinant non-collagenous domain 1 shows similar mobility. In vitro, several proteolytic cleavage sites in the non-collagenous domain 1 hinge region generating different endostatin-like peptides are reported. Detected in placenta (at protein level). Present in multiple organs with highest levels in liver, lung and kidney.

Its subcellular location is the secreted. It is found in the extracellular space. The protein localises to the extracellular matrix. It localises to the basement membrane. Functionally, probably plays a major role in determining the retinal structure as well as in the closure of the neural tube. May regulate extracellular matrix-dependent motility and morphogenesis of endothelial and non-endothelial cells; the function requires homotrimerization and implicates MAPK signaling. In terms of biological role, potently inhibits endothelial cell proliferation and angiogenesis. May inhibit angiogenesis by binding to the heparan sulfate proteoglycans involved in growth factor signaling. Inhibits VEGFA-induced endothelial cell proliferation and migration. Seems to inhibit VEGFA-mediated signaling by blocking the interaction of VEGFA to its receptor KDR/VEGFR2. Modulates endothelial cell migration in an integrin-dependent manner implicating integrin ITGA5:ITGB1 and to a lesser extent ITGAV:ITGB3 and ITGAV:ITGB5. May negatively regulate the activity of homotrimeric non-collagenous domain 1. The polypeptide is Collagen alpha-1(XVIII) chain (Homo sapiens (Human)).